A 515-amino-acid polypeptide reads, in one-letter code: Ribosome assembly protein 4 (515 aa).

Residues 20-128 are interaction with MDN1; sequence REVAIIPKDL…LLYTPRAVFK (109 aa). The tract at residues 29-125 is ubiquitin-like (UBL) domain; the sequence is LPNVSIKFQA…QITLLYTPRA (97 aa). WD repeat units lie at residues 141–181, 184–223, 227–273, 276–314, 352–396, 400–439, 442–481, and 484–515; these read GHGS…PMHT, GHYNWVLCVSWSPDGEVIATGSMDNTIRLWDPKSGQCLGD, GHSK…CQYT, GHTNSVSCVKWGGQGLLYSGSHDRTVRVWDINSQGRCIN, AQKK…KPIA, GHQKLVNHVAFSPDGRYIVSASFDNSIKLWDGRDGKFIST, GHVASVYQVAWSSDCRLLVSCSKDTTLKVWDVRTRKLSVD, and GHKDEVYTVDWSVDGKRVCSGGKDKMVRLWTH.

Belongs to the NLE1/RSA4 family. Associates with the pre-60S ribosomal particle. Interacts (via WD repeats) with uL18 (RPL5). Interacts (via UBL domain) with MDN1 (via VWFA/MIDAS domain). Interacts (via WD repeats) with NSA2.

It is found in the nucleus. The protein resides in the nucleolus. Its function is as follows. Involved in ribosome biogenesis. Required for processing and efficient intra-nuclear transport of pre-60S ribosomal subunits. Interacts with the AAA-ATPase Midasin (MDN1/REA1), which is essential for the ATP-dependent dissociation of a group of nonribosomal factors from the pre-60S particle. This is Ribosome assembly protein 4 from Saccharomyces cerevisiae (strain ATCC 204508 / S288c) (Baker's yeast).